The following is a 281-amino-acid chain: MVLTHNVLAVTFGVLGNIISFIVFLAPVPTFVRICKKKSIEGFESLPYVSALFSAMLWIYYALQKDGAGFLLITINAVGCFIETIYIILFITYANKKARISTLKVLGLLNFLGFAAIILVCELLTKGSNREKVLGGICVGFSVCVFAAPLSIMRVVIRTKSVEFMPFSLSLFLTISAITWLFYGLAIKDFYVALPNILGAFLGAVQMILYVIFKYYKTPLVVDETEKPKTVSDHSINMVKLSSTPASGDLTVQPQTNPDVSHPIKTHGGDLEDQMDKKMPN.

The Extracellular portion of the chain corresponds to 1–6 (MVLTHN). The chain crosses the membrane as a helical span at residues 7–27 (VLAVTFGVLGNIISFIVFLAP). The MtN3/slv 1 domain maps to 11–97 (TFGVLGNIIS…ILFITYANKK (87 aa)). Topologically, residues 28-42 (VPTFVRICKKKSIEG) are cytoplasmic. A helical membrane pass occupies residues 43-63 (FESLPYVSALFSAMLWIYYAL). The Extracellular portion of the chain corresponds to 64-70 (QKDGAGF). The chain crosses the membrane as a helical span at residues 71-91 (LLITINAVGCFIETIYIILFI). Topologically, residues 92–104 (TYANKKARISTLK) are cytoplasmic. The chain crosses the membrane as a helical span at residues 105–125 (VLGLLNFLGFAAIILVCELLT). Topologically, residues 126 to 132 (KGSNREK) are extracellular. A helical transmembrane segment spans residues 133–153 (VLGGICVGFSVCVFAAPLSIM). One can recognise a MtN3/slv 2 domain in the interval 133–216 (VLGGICVGFS…MILYVIFKYY (84 aa)). The Cytoplasmic segment spans residues 154–166 (RVVIRTKSVEFMP). Residues 167-187 (FSLSLFLTISAITWLFYGLAI) traverse the membrane as a helical segment. The Extracellular portion of the chain corresponds to 188-192 (KDFYV). The helical transmembrane segment at 193 to 213 (ALPNILGAFLGAVQMILYVIF) threads the bilayer. At 214–281 (KYYKTPLVVD…EDQMDKKMPN (68 aa)) the chain is on the cytoplasmic side. Polar residues predominate over residues 244 to 259 (TPASGDLTVQPQTNPD). Residues 244 to 281 (TPASGDLTVQPQTNPDVSHPIKTHGGDLEDQMDKKMPN) are disordered. A compositionally biased stretch (basic and acidic residues) spans 267–281 (HGGDLEDQMDKKMPN).

It belongs to the SWEET sugar transporter family. As to quaternary structure, forms homooligomers and/or heterooligomers.

Its subcellular location is the cell membrane. In terms of biological role, mediates both low-affinity uptake and efflux of sugar across the plasma membrane. This Arabidopsis thaliana (Mouse-ear cress) protein is Bidirectional sugar transporter SWEET14.